Consider the following 446-residue polypeptide: Glutamine synthetase (446 aa).

The 89-residue stretch at 15 to 103 (ENVKFLRLQI…LICDVYYPDG (89 aa)) folds into the GS beta-grasp domain. The 337-residue stretch at 110–446 (PRYVLKRQIE…WELDRYLATY (337 aa)) folds into the GS catalytic domain. Mg(2+) contacts are provided by Glu134 and Glu136. Glu186 provides a ligand contact to ATP. 2 residues coordinate Mg(2+): Glu191 and Glu198. L-glutamate-binding positions include 242 to 243 (NG) and Gly243. His247 contacts Mg(2+). Residue Ser251 coordinates ATP. Arg300, Glu306, and Arg318 together coordinate L-glutamate. Residues Arg318 and Arg323 each contribute to the ATP site. Glu335 contributes to the Mg(2+) binding site. An L-glutamate-binding site is contributed by Arg337.

It belongs to the glutamine synthetase family. In terms of assembly, interacts with GCBP (TTHA1554). The cofactor is Mg(2+).

The protein resides in the cytoplasm. It carries out the reaction L-glutamate + NH4(+) + ATP = L-glutamine + ADP + phosphate + H(+). Its activity is regulated as follows. Activity increases by approximately two-fold in the presence of GCBP. Functionally, catalyzes the ATP-dependent biosynthesis of glutamine from glutamate and ammonia. This is Glutamine synthetase from Thermus thermophilus (strain ATCC 27634 / DSM 579 / HB8).